The following is a 141-amino-acid chain: Globin, extracellular monomeric (141 aa).

One can recognise a Globin domain in the interval E1–D141. C2 and C131 are joined by a disulfide. H94 lines the heme b pocket.

Belongs to the globin family. The giant hemoglobins of worms are formed of a monomeric subunit and a disulfide-bonded trimer. This subunit is monomeric.

It localises to the secreted. In Tubifex tubifex (Sludge worm), this protein is Globin, extracellular monomeric.